A 363-amino-acid polypeptide reads, in one-letter code: Ribosomal RNA large subunit methyltransferase M (363 aa).

S-adenosyl-L-methionine is bound by residues Ser-190, 223-226, Asp-242, Asp-262, and Asp-280; that span reads CPGG. Lys-309 functions as the Proton acceptor in the catalytic mechanism.

Belongs to the class I-like SAM-binding methyltransferase superfamily. RNA methyltransferase RlmE family. RlmM subfamily. As to quaternary structure, monomer.

It is found in the cytoplasm. The catalysed reaction is cytidine(2498) in 23S rRNA + S-adenosyl-L-methionine = 2'-O-methylcytidine(2498) in 23S rRNA + S-adenosyl-L-homocysteine + H(+). Its function is as follows. Catalyzes the 2'-O-methylation at nucleotide C2498 in 23S rRNA. The protein is Ribosomal RNA large subunit methyltransferase M of Actinobacillus pleuropneumoniae serotype 5b (strain L20).